We begin with the raw amino-acid sequence, 155 residues long: Transcription antitermination protein NusB (155 aa).

This sequence belongs to the NusB family.

Functionally, involved in transcription antitermination. Required for transcription of ribosomal RNA (rRNA) genes. Binds specifically to the boxA antiterminator sequence of the ribosomal RNA (rrn) operons. This chain is Transcription antitermination protein NusB, found in Aliivibrio fischeri (strain ATCC 700601 / ES114) (Vibrio fischeri).